The chain runs to 211 residues: ATP phosphoribosyltransferase (211 aa).

The protein belongs to the ATP phosphoribosyltransferase family. Short subfamily. In terms of assembly, heteromultimer composed of HisG and HisZ subunits.

It is found in the cytoplasm. It carries out the reaction 1-(5-phospho-beta-D-ribosyl)-ATP + diphosphate = 5-phospho-alpha-D-ribose 1-diphosphate + ATP. The protein operates within amino-acid biosynthesis; L-histidine biosynthesis; L-histidine from 5-phospho-alpha-D-ribose 1-diphosphate: step 1/9. In terms of biological role, catalyzes the condensation of ATP and 5-phosphoribose 1-diphosphate to form N'-(5'-phosphoribosyl)-ATP (PR-ATP). Has a crucial role in the pathway because the rate of histidine biosynthesis seems to be controlled primarily by regulation of HisG enzymatic activity. The sequence is that of ATP phosphoribosyltransferase from Pseudomonas entomophila (strain L48).